A 381-amino-acid chain; its full sequence is 4-hydroxyphenylpyruvate dioxygenase (381 aa).

2 consecutive VOC domains span residues 22–156 (GMDA…LVDR) and 184–338 (AIDH…IFTK). Residues His187, His270, and Glu349 each coordinate Fe cation.

This sequence belongs to the 4HPPD family. Homodimer. It depends on Fe cation as a cofactor.

The enzyme catalyses 3-(4-hydroxyphenyl)pyruvate + O2 = homogentisate + CO2. It functions in the pathway amino-acid degradation; L-phenylalanine degradation; acetoacetate and fumarate from L-phenylalanine: step 3/6. This is 4-hydroxyphenylpyruvate dioxygenase (hpd) from Streptomyces avermitilis (strain ATCC 31267 / DSM 46492 / JCM 5070 / NBRC 14893 / NCIMB 12804 / NRRL 8165 / MA-4680).